Here is a 266-residue protein sequence, read N- to C-terminus: Hydroxyacylglutathione hydrolase (266 aa).

Zn(2+) contacts are provided by H53, H55, D57, H58, H118, D140, and H178.

The protein belongs to the metallo-beta-lactamase superfamily. Glyoxalase II family. As to quaternary structure, monomer. Zn(2+) is required as a cofactor.

It carries out the reaction an S-(2-hydroxyacyl)glutathione + H2O = a 2-hydroxy carboxylate + glutathione + H(+). Its pathway is secondary metabolite metabolism; methylglyoxal degradation; (R)-lactate from methylglyoxal: step 2/2. Functionally, thiolesterase that catalyzes the hydrolysis of S-D-lactoyl-glutathione to form glutathione and D-lactic acid. This Cupriavidus taiwanensis (strain DSM 17343 / BCRC 17206 / CCUG 44338 / CIP 107171 / LMG 19424 / R1) (Ralstonia taiwanensis (strain LMG 19424)) protein is Hydroxyacylglutathione hydrolase.